A 283-amino-acid chain; its full sequence is Lipoyl synthase (283 aa).

The [4Fe-4S] cluster site is built by Cys-35, Cys-40, Cys-46, Cys-61, Cys-65, Cys-68, and Ser-273. The 216-residue stretch at 47 to 262 folds into the Radical SAM core domain; that stretch reads FRSRQATFLI…RERALAMGFK (216 aa).

Belongs to the radical SAM superfamily. Lipoyl synthase family. The cofactor is [4Fe-4S] cluster.

It localises to the cytoplasm. It carries out the reaction [[Fe-S] cluster scaffold protein carrying a second [4Fe-4S](2+) cluster] + N(6)-octanoyl-L-lysyl-[protein] + 2 oxidized [2Fe-2S]-[ferredoxin] + 2 S-adenosyl-L-methionine + 4 H(+) = [[Fe-S] cluster scaffold protein] + N(6)-[(R)-dihydrolipoyl]-L-lysyl-[protein] + 4 Fe(3+) + 2 hydrogen sulfide + 2 5'-deoxyadenosine + 2 L-methionine + 2 reduced [2Fe-2S]-[ferredoxin]. It functions in the pathway protein modification; protein lipoylation via endogenous pathway; protein N(6)-(lipoyl)lysine from octanoyl-[acyl-carrier-protein]: step 2/2. Its function is as follows. Catalyzes the radical-mediated insertion of two sulfur atoms into the C-6 and C-8 positions of the octanoyl moiety bound to the lipoyl domains of lipoate-dependent enzymes, thereby converting the octanoylated domains into lipoylated derivatives. This chain is Lipoyl synthase, found in Geotalea uraniireducens (strain Rf4) (Geobacter uraniireducens).